Consider the following 296-residue polypeptide: Cobalamin trafficking protein CblD (296 aa).

Residues 1–38 (MAHVLCNRARLVSYLPGFCSLVKRVINPRAFSTAGSSG) constitute a mitochondrion transit peptide. At K203 the chain carries N6-acetyllysine.

Heterodimer with MMACHC. Forms a multiprotein complex with MMACHC, MTR and MTRR.

The protein resides in the cytoplasm. The protein localises to the mitochondrion. In terms of biological role, involved in cobalamin metabolism and trafficking. Plays a role in regulating the biosynthesis and the proportion of two coenzymes, methylcob(III)alamin (MeCbl) and 5'-deoxyadenosylcobalamin (AdoCbl). Promotes oxidation of cob(II)alamin bound to MMACHC. The processing of cobalamin in the cytosol occurs in a multiprotein complex composed of at least MMACHC, MMADHC, MTRR (methionine synthase reductase) and MTR (methionine synthase) which may contribute to shuttle safely and efficiently cobalamin towards MTR in order to produce methionine. The polypeptide is Cobalamin trafficking protein CblD (Mmadhc) (Rattus norvegicus (Rat)).